Here is a 96-residue protein sequence, read N- to C-terminus: Glutamyl-tRNA(Gln) amidotransferase subunit C (96 aa).

It belongs to the GatC family. In terms of assembly, heterotrimer of A, B and C subunits.

It catalyses the reaction L-glutamyl-tRNA(Gln) + L-glutamine + ATP + H2O = L-glutaminyl-tRNA(Gln) + L-glutamate + ADP + phosphate + H(+). The catalysed reaction is L-aspartyl-tRNA(Asn) + L-glutamine + ATP + H2O = L-asparaginyl-tRNA(Asn) + L-glutamate + ADP + phosphate + 2 H(+). Allows the formation of correctly charged Asn-tRNA(Asn) or Gln-tRNA(Gln) through the transamidation of misacylated Asp-tRNA(Asn) or Glu-tRNA(Gln) in organisms which lack either or both of asparaginyl-tRNA or glutaminyl-tRNA synthetases. The reaction takes place in the presence of glutamine and ATP through an activated phospho-Asp-tRNA(Asn) or phospho-Glu-tRNA(Gln). The sequence is that of Glutamyl-tRNA(Gln) amidotransferase subunit C from Pseudomonas aeruginosa (strain ATCC 15692 / DSM 22644 / CIP 104116 / JCM 14847 / LMG 12228 / 1C / PRS 101 / PAO1).